Reading from the N-terminus, the 213-residue chain is MILSLDRQIPLSTLSEINKYIHKVKIGYPLILENIEYLDDIVKLHWDEIIFDLKLADIDNTMVLIVSKFINYADSFIAHSFIGIEGALDKLSEFLKNQNKSLYLVLSMSHKGWNDEFYPYLKNIAKTIDPKGFVVGATRPNMIRIVRNDFRDKIIISPGVGAQGAMIGDAICNGADYEIIGRSIYESKDPVTETKKIIETQEVKINECKRTEN.

Substrate is bound by residues D6, K25, 52–61 (DLKLADIDNT), S109, 158–168 (PGVGAQGAMIG), G181, and R182. K54 serves as the catalytic Proton donor.

Belongs to the OMP decarboxylase family. Type 1 subfamily. In terms of assembly, homodimer.

The catalysed reaction is orotidine 5'-phosphate + H(+) = UMP + CO2. Its pathway is pyrimidine metabolism; UMP biosynthesis via de novo pathway; UMP from orotate: step 2/2. Its function is as follows. Catalyzes the decarboxylation of orotidine 5'-monophosphate (OMP) to uridine 5'-monophosphate (UMP). The sequence is that of Orotidine 5'-phosphate decarboxylase from Sulfurisphaera tokodaii (strain DSM 16993 / JCM 10545 / NBRC 100140 / 7) (Sulfolobus tokodaii).